The sequence spans 335 residues: Fructose-1,6-bisphosphatase class 1 (335 aa).

Mg(2+) contacts are provided by Glu-93, Asp-117, Leu-119, and Asp-120. Residues 120–123 (DGSS), Asn-213, Tyr-244, and Lys-274 each bind substrate. Glu-280 contributes to the Mg(2+) binding site.

This sequence belongs to the FBPase class 1 family. As to quaternary structure, homotetramer. Requires Mg(2+) as cofactor.

Its subcellular location is the cytoplasm. It carries out the reaction beta-D-fructose 1,6-bisphosphate + H2O = beta-D-fructose 6-phosphate + phosphate. Its pathway is carbohydrate biosynthesis; gluconeogenesis. The sequence is that of Fructose-1,6-bisphosphatase class 1 from Flavobacterium psychrophilum (strain ATCC 49511 / DSM 21280 / CIP 103535 / JIP02/86).